The chain runs to 428 residues: YTH domain-containing protein ECT1 (428 aa).

The 138-residue stretch at 245–382 (AKFFVIKSYS…EHGTKIIKIF (138 aa)) folds into the YTH domain. RNA contacts are provided by residues 251 to 253 (KSY), D257, 267 to 268 (WS), N300, W324, W329, and W337.

In terms of assembly, interacts (via C-terminus) with CIPK1. Expressed in root apex, shoot apex, lateral root primordia, stamens, carpels and trichomes.

It is found in the nucleus. The protein localises to the cytoplasm. Its function is as follows. Specifically recognizes and binds N6-methyladenosine (m6A)-containing RNAs, and regulates mRNA stability. M6A is a modification present at internal sites of mRNAs and some non-coding RNAs and plays a role in mRNA stability and processing. The protein is YTH domain-containing protein ECT1 of Arabidopsis thaliana (Mouse-ear cress).